Reading from the N-terminus, the 390-residue chain is Ketoisovalerate reductase BEA2 (390 aa).

70–75 lines the NADP(+) pocket; it reads GPGNIG. Lys-285 functions as the Proton donor in the catalytic mechanism. Substrate is bound by residues Asn-289 and Asn-293.

This sequence belongs to the ketopantoate reductase family.

The enzyme catalyses (R)-2-hydroxy-3-methylbutanoate + NADP(+) = 3-methyl-2-oxobutanoate + NADPH + H(+). The reductase activity is increased by Mg(2+) (195%), Ca(2+) (169%) and slightly increased by K(+) (123%). The reduction activity is inhibited by Fe(2+) and Co(2+), and almost totally inhibited by Cu(2+), Mn(2+), Zn(2+) and Fe(3+) (from 3% to 9% residual activity respectively). The chelating agent EDTA had little effect, suggesting Mg(2+) and Ca(2+) are not determining factors, though they could promote the reductase enzyme activity. In terms of biological role, ketoisovalerate reductase; part of the gene cluster that mediates the biosynthesis of beauvericin (BEA), a non-ribosomal cyclic hexadepsipeptide that shows antibiotic, antifungal, insecticidal, and cancer cell antiproliferative and antihaptotactic activity. Ketoisovalerate reductase BEA2 catalyzes the NADPH-specific reduction of ketoisovaleric acid to hydroxyisovalerate, a precursor for beauvericin biosynthesis. The nonribosomal cyclodepsipeptide synthetase BEA1 then catalyzes the formation of beauvericin via condensation and cyclization of 3 dipeptidol monomers, each composed of one unit of hydroxyisovalerate and one unit of N-methyl-phenylalanine. This chain is Ketoisovalerate reductase BEA2, found in Gibberella intermedia (Bulb rot disease fungus).